A 167-amino-acid polypeptide reads, in one-letter code: Lipoprotein signal peptidase (167 aa).

Transmembrane regions (helical) follow at residues 67–87 and 91–111; these read WILV…LWRA and LVAL…IDRI. Active-site residues include Asp118 and Asp136. A helical transmembrane segment spans residues 127–147; it reads FSWYVFNLADAAIVAGVALLI.

The protein belongs to the peptidase A8 family.

Its subcellular location is the cell inner membrane. It carries out the reaction Release of signal peptides from bacterial membrane prolipoproteins. Hydrolyzes -Xaa-Yaa-Zaa-|-(S,diacylglyceryl)Cys-, in which Xaa is hydrophobic (preferably Leu), and Yaa (Ala or Ser) and Zaa (Gly or Ala) have small, neutral side chains.. It functions in the pathway protein modification; lipoprotein biosynthesis (signal peptide cleavage). This protein specifically catalyzes the removal of signal peptides from prolipoproteins. This chain is Lipoprotein signal peptidase, found in Beijerinckia indica subsp. indica (strain ATCC 9039 / DSM 1715 / NCIMB 8712).